An 857-amino-acid chain; its full sequence is Protein argonaute-1 (857 aa).

Residues 227–346 (PVIEFMCEVL…LPLEVCNIVA (120 aa)) form the PAZ domain. Interaction with guide RNA stretches follow at residues 309–314 (YFKQKY) and 522–564 (GKTP…LCLK). The Piwi domain maps to 515-816 (LIIVILPGKT…VAFRARYHLV (302 aa)). The impairs access of bound RNA to the active site stretch occupies residues 670 to 675 (PEGQLP). Interaction with guide RNA stretches follow at residues 708–712 (RHHTR), 751–759 (HAGIQGTSR), and 788–813 (YVRCTRSVSIPAPAYYARLVAFRARY).

The protein belongs to the argonaute family. Ago subfamily. In terms of assembly, interacts with DDB1, DDX5, DDX6, DHX30, DHX36, DDX47, DICER1, AGO2, ELAVL1, HNRNPF, IGF2BP1, ILF3, IMP8, MATR3, MOV10, PABPC1, PRMT5, RBM4, SART3, TNRC6B, UPF1 and YBX1. Associates with polysomes and messenger ribonucleoproteins (mNRPs). Interacts with LIMD1, WTIP and AJUBA. Interacts with APOBEC3F, APOBEC3G and APOBEC3H. Ubiquitinated on surface-exposed lysines by a SCF-like E3 ubiquitin-protein ligase complex containing ZSWIM8 during target-directed microRNA degradation (TDMD), a process that mediates degradation of microRNAs (miRNAs). Ubiquitination by the SCF-like E3 ubiquitin-protein ligase complex containing ZSWIM8 leads to its subsequent degradation, thereby exposing miRNAs for degradation. ZSWIM8 recognizes and binds AGO1 when it is engaged with a TDMD target.

The protein localises to the cytoplasm. It is found in the P-body. In terms of biological role, required for RNA-mediated gene silencing (RNAi). Binds to short RNAs such as microRNAs (miRNAs) or short interfering RNAs (siRNAs), and represses the translation of mRNAs which are complementary to them. Lacks endonuclease activity and does not appear to cleave target mRNAs. Also required for transcriptional gene silencing (TGS) of promoter regions which are complementary to bound short antigene RNAs (agRNAs). This chain is Protein argonaute-1 (AGO1), found in Homo sapiens (Human).